The chain runs to 358 residues: MPPTKRFRIQAKNIFLTYPQCSLSKEEALEQIQGIQLSSNKKYIKIARELHEDGQPHLHVLLQLEGKVQITNIRLFDLVSPTRSAHFHPNIQGAKSSSDVKSYVDKDGDTIEWGEFQIDGRSARGGQQTANDSYAKALNATSLEQALQILKEEQPKDYFLQHHNLLNNAQKIFQRAPDPWTPLFPLSSFTNVPEEMQEWADAYFGVDAAARPLRYNSIIVEGDSRTGKTMWARSLGAHNYITGHLDFSLRTYYDEVEYNVIDDVDPTYLKMKHWKHLIGAQKEWQTNLKYGKPRVIKGGIPCIILCNPGPESSYQQFLEKPENEALKSWTLHNSTFCKLQGPLFNNQAAASSQGDSTL.

The 109-residue stretch at 8 to 116 (RIQAKNIFLT…DGDTIEWGEF (109 aa)) folds into the CRESS-DNA virus Rep endonuclease domain. Positions 15–18 (FLTY) match the RCR-1 motif. A divalent metal cation contacts are provided by Glu49, His57, and His59. The short motif at 57–59 (HLH) is the RCR-2 element. Catalysis depends on Tyr103, which acts as the For DNA cleavage activity. The short motif at 103 to 106 (YVDK) is the RCR-3 element. Asp107 is a binding site for a divalent metal cation. Positions 143–153 (LEQALQILKEE) are binding to RBR1. The interval 156 to 176 (KDYFLQHHNLLNNAQKIFQRA) is oligomerization. Residue 222–229 (GDSRTGKT) coordinates ATP.

It belongs to the geminiviridae Rep protein family. Homooligomer. Interacts with the replication enhancer protein (REn). Interacts with host retinoblastoma-related protein 1 (RBR1), and may thereby induce the transcription of host replicative enzymes even if the cell is not dividing anymore. Interacts with host PCNA. Interacts with host SCE1 protein. Mg(2+) serves as cofactor. Requires Mn(2+) as cofactor.

The protein localises to the host nucleus. Functionally, essential for the replication of viral ssDNA. The closed circular ssDNA genome is first converted to a superhelical dsDNA. Rep binds a specific region at the genome origin of replication. It introduces an endonucleolytic nick within the conserved sequence 5'-TAATATTAC-3' in the intergenic region of the genome present in all geminiviruses, thereby initiating the rolling circle replication (RCR). Following cleavage, binds covalently to the 5'-phosphate of DNA as a tyrosyl ester. The cleavage gives rise to a free 3'-OH that serves as a primer for the cellular DNA polymerase. The polymerase synthesizes the (+) strand DNA by rolling circle mechanism. After one round of replication, a Rep-catalyzed nucleotidyl transfer reaction releases a circular single-stranded virus genome, thereby terminating the replication. Displays origin-specific DNA cleavage, nucleotidyl transferase, ATPase and helicase activities. This is Replication-associated protein from Beet curly top virus (strain California/Logan) (BCTV).